The chain runs to 238 residues: Transmembrane protein 127 (238 aa).

Methionine 1 carries the N-acetylmethionine modification. Positions 1–11 are enriched in gly residues; the sequence is MYAPGGAGLPG. A disordered region spans residues 1-27; sequence MYAPGGAGLPGGRRRRSPGGSALPKQP. Serine 17 carries the phosphoserine modification. A run of 3 helical transmembrane segments spans residues 96–116, 130–150, and 169–189; these read IAAF…LDVF, AFAH…SYWA, and VYVT…ASIL.

It belongs to the TMEM127 family. As to expression, widely expressed.

It localises to the cell membrane. Its subcellular location is the cytoplasm. In terms of biological role, controls cell proliferation acting as a negative regulator of TOR signaling pathway mediated by mTORC1. May act as a tumor suppressor. The chain is Transmembrane protein 127 (TMEM127) from Homo sapiens (Human).